Reading from the N-terminus, the 424-residue chain is Histidine--tRNA ligase (424 aa).

It belongs to the class-II aminoacyl-tRNA synthetase family. In terms of assembly, homodimer.

It is found in the cytoplasm. The enzyme catalyses tRNA(His) + L-histidine + ATP = L-histidyl-tRNA(His) + AMP + diphosphate + H(+). The sequence is that of Histidine--tRNA ligase from Escherichia coli O127:H6 (strain E2348/69 / EPEC).